The chain runs to 216 residues: Cytidylate kinase (216 aa).

7-15 is a binding site for ATP; that stretch reads GPSGTGKST.

The protein belongs to the cytidylate kinase family. Type 1 subfamily.

The protein localises to the cytoplasm. It catalyses the reaction CMP + ATP = CDP + ADP. It carries out the reaction dCMP + ATP = dCDP + ADP. This is Cytidylate kinase from Chlamydia trachomatis serovar L2 (strain ATCC VR-902B / DSM 19102 / 434/Bu).